The chain runs to 158 residues: FUN14 domain-containing protein 1 (158 aa).

Residues 21–24 carry the YXXL motif; the sequence is YEVV. 2 helical membrane passes run 51–70 and 77–98; these read YSVT…AGYL and IAAT…SGYV.

Belongs to the FUN14 family.

It is found in the mitochondrion outer membrane. Functionally, acts as an activator of hypoxia-induced mitophagy, an important mechanism for mitochondrial quality control. This Tetraodon nigroviridis (Spotted green pufferfish) protein is FUN14 domain-containing protein 1 (fundc1).